A 407-amino-acid polypeptide reads, in one-letter code: Serine/threonine transporter SstT (407 aa).

The next 9 helical transmembrane spans lie at 12 to 32 (GNLIVQICIGIVLGILIGISS), 42 to 62 (LGILFTSALKAIAPMLVFILI), 81 to 101 (IIILYIVGTFLASACAVLANF), 141 to 161 (ALSSGNYLGILTWAIAGGIAL), 179 to 199 (VLKIVKFIVKLAPFGIFGLVA), 218 to 238 (ILLVATMLFVTFVINALIVFF), 245 to 267 (FPLIFICLRHSAFFAFFTRSSAA), 288 to 308 (ISIPLGATINMAGAAVTIAIL), and 330 to 350 (IIATFAACGASGVAGGSLLLI).

The protein belongs to the dicarboxylate/amino acid:cation symporter (DAACS) (TC 2.A.23) family.

The protein resides in the cell inner membrane. The catalysed reaction is L-serine(in) + Na(+)(in) = L-serine(out) + Na(+)(out). The enzyme catalyses L-threonine(in) + Na(+)(in) = L-threonine(out) + Na(+)(out). Its function is as follows. Involved in the import of serine and threonine into the cell, with the concomitant import of sodium (symport system). The sequence is that of Serine/threonine transporter SstT from Campylobacter jejuni subsp. jejuni serotype O:23/36 (strain 81-176).